Reading from the N-terminus, the 152-residue chain is Transcription elongation factor Spt5 (152 aa).

Residues 99–129 (EGDLVEVISGPFRGMQAQVVRVESTKNEVVL) enclose the KOW domain.

The protein belongs to the archaeal Spt5 family. In terms of assembly, heterodimer composed of Spt4 and Spt5. Interacts with RNA polymerase (RNAP).

Its function is as follows. Stimulates transcription elongation. The protein is Transcription elongation factor Spt5 of Sulfolobus acidocaldarius (strain ATCC 33909 / DSM 639 / JCM 8929 / NBRC 15157 / NCIMB 11770).